The following is a 199-amino-acid chain: Acireductone dioxygenase 2 (199 aa).

The Fe(2+) site is built by His98, His100, Glu104, and His143. Ni(2+) contacts are provided by His98, His100, Glu104, and His143.

It belongs to the acireductone dioxygenase (ARD) family. Requires Fe(2+) as cofactor. The cofactor is Ni(2+).

Its subcellular location is the cytoplasm. The protein resides in the nucleus. It carries out the reaction 1,2-dihydroxy-5-(methylsulfanyl)pent-1-en-3-one + O2 = 4-methylsulfanyl-2-oxobutanoate + formate + 2 H(+). The catalysed reaction is 1,2-dihydroxy-5-(methylsulfanyl)pent-1-en-3-one + O2 = 3-(methylsulfanyl)propanoate + CO + formate + 2 H(+). Its pathway is amino-acid biosynthesis; L-methionine biosynthesis via salvage pathway; L-methionine from S-methyl-5-thio-alpha-D-ribose 1-phosphate: step 5/6. In terms of biological role, catalyzes 2 different reactions between oxygen and the acireductone 1,2-dihydroxy-3-keto-5-methylthiopentene (DHK-MTPene) depending upon the metal bound in the active site. Fe-containing acireductone dioxygenase (Fe-ARD) produces formate and 2-keto-4-methylthiobutyrate (KMTB), the alpha-ketoacid precursor of methionine in the methionine recycle pathway. Ni-containing acireductone dioxygenase (Ni-ARD) produces methylthiopropionate, carbon monoxide and formate, and does not lie on the methionine recycle pathway. This chain is Acireductone dioxygenase 2, found in Vitis vinifera (Grape).